The primary structure comprises 189 residues: GTP cyclohydrolase 1 (189 aa).

Residues cysteine 78, histidine 81, and cysteine 150 each contribute to the Zn(2+) site.

It belongs to the GTP cyclohydrolase I family. Homomer.

The catalysed reaction is GTP + H2O = 7,8-dihydroneopterin 3'-triphosphate + formate + H(+). It participates in cofactor biosynthesis; 7,8-dihydroneopterin triphosphate biosynthesis; 7,8-dihydroneopterin triphosphate from GTP: step 1/1. The polypeptide is GTP cyclohydrolase 1 (Lysinibacillus sphaericus (strain C3-41)).